We begin with the raw amino-acid sequence, 316 residues long: ATP synthase gamma chain (316 aa).

It belongs to the ATPase gamma chain family. As to quaternary structure, F-type ATPases have 2 components, CF(1) - the catalytic core - and CF(0) - the membrane proton channel. CF(1) has five subunits: alpha(3), beta(3), gamma(1), delta(1), epsilon(1). CF(0) has three main subunits: a, b and c.

The protein resides in the cellular thylakoid membrane. Functionally, produces ATP from ADP in the presence of a proton gradient across the membrane. The gamma chain is believed to be important in regulating ATPase activity and the flow of protons through the CF(0) complex. This is ATP synthase gamma chain from Prochlorococcus marinus (strain NATL2A).